Reading from the N-terminus, the 732-residue chain is Catalase-peroxidase (732 aa).

Residues 1 to 10 (MDAKTDDKAG) are compositionally biased toward basic and acidic residues. The disordered stretch occupies residues 1-26 (MDAKTDDKAGKCPVAHGPAPRGNRDW). The tryptophyl-tyrosyl-methioninium (Trp-Tyr) (with M-243) cross-link spans 95–217 (WHSAGTYRTT…LGAVQMGLIY (123 aa)). The Proton acceptor role is filled by His96. The tryptophyl-tyrosyl-methioninium (Tyr-Met) (with W-95) cross-link spans 217 to 243 (YVNPEGPNGNPDPLGSAKDIRETFARM). Residue His258 coordinates heme b.

It belongs to the peroxidase family. Peroxidase/catalase subfamily. In terms of assembly, homodimer or homotetramer. Heme b is required as a cofactor. In terms of processing, formation of the three residue Trp-Tyr-Met cross-link is important for the catalase, but not the peroxidase activity of the enzyme.

The enzyme catalyses H2O2 + AH2 = A + 2 H2O. It carries out the reaction 2 H2O2 = O2 + 2 H2O. Functionally, bifunctional enzyme with both catalase and broad-spectrum peroxidase activity. The sequence is that of Catalase-peroxidase from Rhodopseudomonas palustris (strain BisB18).